A 486-amino-acid chain; its full sequence is Histamine H1 receptor (486 aa).

At 1–29 (MSFANTSSTFEDKMCEGNRTAMASPQLLP) the chain is on the extracellular side. N-linked (GlcNAc...) asparagine glycosylation is found at Asn5 and Asn18. A helical transmembrane segment spans residues 30 to 50 (LVVVLSSISLVTVGLNLLVLY). Topologically, residues 51 to 64 (AVHSERKLHTVGNL) are cytoplasmic. Residues 65-89 (YIVSLSVADLIVGAVVMPMNILYLI) traverse the membrane as a helical segment. Residues 90–97 (MTKWSLGR) lie on the Extracellular side of the membrane. Residues 98-123 (PLCLFWLSMDYVASTASIFSVFILCI) traverse the membrane as a helical segment. The cysteines at positions 100 and 180 are disulfide-linked. Asp107 and Thr112 together coordinate histamine. Residues 107-112 (DYVAST) are important for agonist binding. Residues 124-144 (DRYRSVQQPLRYLRYRTKTRA) lie on the Cytoplasmic side of the membrane. Residues Thr140 and Thr142 each carry the phosphothreonine modification. A helical transmembrane segment spans residues 145–164 (SATILGAWFFSFLWVIPILG). Residues 165–188 (WHHFMPPAPELREDKCETDFYNVT) lie on the Extracellular side of the membrane. The helical transmembrane segment at 189-211 (WFKIMTAIINFYLPTLLMLWFYV) threads the bilayer. Asn198 provides a ligand contact to histamine. The Cytoplasmic segment spans residues 212-415 (KIYKAVRRHC…LNRERKAAKQ (204 aa)). At Ser230 the chain carries Phosphoserine. Positions 241–253 (SDDTKEGAKKPGR) are enriched in basic and acidic residues. Disordered regions lie at residues 241-295 (SDDT…GERE) and 310-379 (VAEG…RSGS). Residues Ser342 and Ser345 each carry the phosphoserine modification. Residues 347-365 (DQTLVDQQSFSRTTDSDTS) are compositionally biased toward polar residues. Ser379, Ser381, Ser395, and Ser397 each carry phosphoserine. A helical membrane pass occupies residues 416–439 (LGFIMAAFILCWIPYFIFFMVIAF). The interval 423–427 (FILCW) is important for agonist binding. Tyr430 contributes to the histamine binding site. Cys440 and Cys443 are joined by a disulfide. Residues 440–445 (CKSCCS) are Extracellular-facing. A helical membrane pass occupies residues 446-468 (EPMHMFTIWLGYINSTLNPLIYP). Residues 469–486 (LCNENFKKTFKKILHIRS) are Cytoplasmic-facing.

This sequence belongs to the G-protein coupled receptor 1 family. In terms of processing, phosphorylation at sites in the second and third cytoplasmic loops independently contribute to agonist-induced receptor down-regulation.

The protein resides in the cell membrane. Functionally, G-protein-coupled receptor for histamine, a biogenic amine that functions as an immune modulator and a neurotransmitter. Through the H1 receptor, histamine mediates the contraction of smooth muscles and increases capillary permeability due to contraction of terminal venules. Also mediates neurotransmission in the central nervous system and thereby regulates circadian rhythms, emotional and locomotor activities as well as cognitive functions. In Rattus norvegicus (Rat), this protein is Histamine H1 receptor.